Consider the following 227-residue polypeptide: MAHKRLFVYAVLLVICYLVGVTWAETAAQTFPAIGTNSNNNSNAQPAPVPAPAAPAAAAPLAKQVSAPTAAPPAKVIGQPVLAAPGKNSSNSSSTTECVCAGALLPRLDANGKELPICAECKCSHVARNTTLIKVVVIIVIWIISILVIYMLFLMCLDPLLNKRVKANYQEHTNEDDEPTPPLPAVNNQELSARANVLNRVGHQQDKWKRQVREQRRHIYDRHTMLN.

The next 2 helical transmembrane spans lie at 7-24 (FVYAVLLVICYLVGVTWA) and 135-157 (VVVIIVIWIISILVIYMLFLMCL).

The protein belongs to the TMEM9 family.

Its subcellular location is the membrane. This is an uncharacterized protein from Drosophila melanogaster (Fruit fly).